The chain runs to 181 residues: Peptidyl-prolyl cis-trans isomerase H (181 aa).

Residues phenylalanine 17–glutamate 180 form the PPIase cyclophilin-type domain.

Belongs to the cyclophilin-type PPIase family. PPIase H subfamily.

It is found in the nucleus. It carries out the reaction [protein]-peptidylproline (omega=180) = [protein]-peptidylproline (omega=0). In terms of biological role, PPIases accelerate the folding of proteins. It catalyzes the cis-trans isomerization of proline imidic peptide bonds in oligopeptides. The protein is Peptidyl-prolyl cis-trans isomerase H (cyp3) of Aspergillus oryzae (strain ATCC 42149 / RIB 40) (Yellow koji mold).